We begin with the raw amino-acid sequence, 164 residues long: Protein phosphatase 1 regulatory subunit 14C (164 aa).

The span at 1 to 19 (MSVVTGGGEAAGGGGGGGA) shows a compositional bias: gly residues. Positions 1–70 (MSVVTGGGEA…QQQRRHQQGK (70 aa)) are disordered. An N-acetylserine modification is found at Ser-2. Ser-25 carries the phosphoserine modification. Arg-27 is modified (omega-N-methylarginine). Ser-33 bears the Phosphoserine mark. Over residues 50–62 (VTTVAAAGQVQQQ) the composition is skewed to low complexity. Thr-72 carries the post-translational modification Phosphothreonine; by ILK1.

Belongs to the PP1 inhibitor family. In terms of processing, the main inhibitory site appears to be Thr-72. Has over 600-fold higher inhibitory activity when phosphorylated, creating a molecular switch for regulating the phosphorylation status of PPP1CA substrates and smooth muscle contraction. Detected in heart, muscle, spinal cord, hippocampus, hypothalamus, thalamus, midbrain, brain stem, cerebellum, brain cortex and olfactory bulb.

It localises to the endomembrane system. In terms of biological role, inhibitor of the PP1 regulatory subunit PPP1CA. This Mus musculus (Mouse) protein is Protein phosphatase 1 regulatory subunit 14C (Ppp1r14c).